The chain runs to 426 residues: Tol-Pal system protein TolB (426 aa).

An N-terminal signal peptide occupies residues 1–25 (MNAMSRISRRIFLALALSLAGLAQA).

Belongs to the TolB family. In terms of assembly, the Tol-Pal system is composed of five core proteins: the inner membrane proteins TolA, TolQ and TolR, the periplasmic protein TolB and the outer membrane protein Pal. They form a network linking the inner and outer membranes and the peptidoglycan layer.

The protein resides in the periplasm. In terms of biological role, part of the Tol-Pal system, which plays a role in outer membrane invagination during cell division and is important for maintaining outer membrane integrity. The chain is Tol-Pal system protein TolB from Dechloromonas aromatica (strain RCB).